A 247-amino-acid polypeptide reads, in one-letter code: Granzyme B(G,H) (247 aa).

An N-terminal signal peptide occupies residues 1-18 (MKILLLLLTLSLASRTKA). Positions 19–20 (GE) are cleaved as a propeptide — activation peptide. In terms of domain architecture, Peptidase S1 spans 21-245 (IIGGHEVKPH…FLSWIKKTMK (225 aa)). An intrachain disulfide couples Cys-49 to Cys-65. His-64 serves as the catalytic Charge relay system. Asn-71 is a glycosylation site (N-linked (GlcNAc...) asparagine). Residue Asp-108 is the Charge relay system of the active site. 2 disulfides stabilise this stretch: Cys-142/Cys-209 and Cys-173/Cys-188. A glycan (N-linked (GlcNAc...) asparagine) is linked at Asn-182. Residue Ser-203 is the Charge relay system of the active site.

It belongs to the peptidase S1 family. Granzyme subfamily.

The protein localises to the secreted. The protein resides in the cytolytic granule. It carries out the reaction Preferential cleavage: -Asp-|-Xaa- &gt;&gt; -Asn-|-Xaa- &gt; -Met-|-Xaa-, -Ser-|-Xaa-.. Its activity is regulated as follows. Inactivated by the serine protease inhibitor diisopropylfluorophosphate. Its function is as follows. Abundant protease in the cytosolic granules of cytotoxic T-cells and NK-cells which activates caspase-independent pyroptosis when delivered into the target cell through the immunological synapse. It cleaves after Asp. Once delivered into the target cell, acts by catalyzing cleavage of gasdermin-E (GSDME), releasing the pore-forming moiety of GSDME, thereby triggering pyroptosis and target cell death. Seems to be linked to an activation cascade of caspases (aspartate-specific cysteine proteases) responsible for apoptosis execution. Cleaves caspase-3 and -9 (CASP3 and CASP9, respectively) to give rise to active enzymes mediating apoptosis. Cleaves and activates CASP7 in response to bacterial infection, promoting plasma membrane repair. The polypeptide is Granzyme B(G,H) (Gzmb) (Mus musculus (Mouse)).